The chain runs to 299 residues: HTH-type transcriptional regulator ArgP (299 aa).

The HTH lysR-type domain maps to 4–60 (LDYKLLLALDAVMQEQNFERAAQRLHITQSAISQRIKQLEQQFAEPLLIRSQPLQAT). Positions 21–40 (FERAAQRLHITQSAISQRIK) form a DNA-binding region, H-T-H motif.

This sequence belongs to the LysR transcriptional regulatory family. In terms of assembly, homodimer.

Its function is as follows. Controls the transcription of genes involved in arginine and lysine metabolism. The polypeptide is HTH-type transcriptional regulator ArgP (Aeromonas salmonicida).